The primary structure comprises 245 residues: Orotidine 5'-phosphate decarboxylase (245 aa).

Substrate is bound by residues Asp-22, Lys-44, 71 to 80, Thr-131, Arg-192, Gln-201, Gly-221, and Arg-222; that span reads DLKFHDIPNT. Catalysis depends on Lys-73, which acts as the Proton donor.

Belongs to the OMP decarboxylase family. Type 1 subfamily. As to quaternary structure, homodimer.

It carries out the reaction orotidine 5'-phosphate + H(+) = UMP + CO2. It functions in the pathway pyrimidine metabolism; UMP biosynthesis via de novo pathway; UMP from orotate: step 2/2. In terms of biological role, catalyzes the decarboxylation of orotidine 5'-monophosphate (OMP) to uridine 5'-monophosphate (UMP). This is Orotidine 5'-phosphate decarboxylase from Escherichia coli O45:K1 (strain S88 / ExPEC).